Reading from the N-terminus, the 234-residue chain is Chalcone--flavanone isomerase 1 (234 aa).

Substrate is bound by residues Thr50, Asn115, and Ser192.

This sequence belongs to the chalcone isomerase family.

The enzyme catalyses a chalcone = a flavanone.. It participates in secondary metabolite biosynthesis; flavonoid biosynthesis. Catalyzes the intramolecular cyclization of bicyclic chalcones into tricyclic (S)-flavanones. Responsible for the isomerization of 4,2',4',6'-tetrahydroxychalcone (also termed chalcone) into naringenin. The sequence is that of Chalcone--flavanone isomerase 1 (CHI1) from Vitis vinifera (Grape).